The primary structure comprises 535 residues: Glutamate--cysteine ligase (535 aa).

The protein belongs to the glutamate--cysteine ligase type 1 family. Type 1 subfamily.

It carries out the reaction L-cysteine + L-glutamate + ATP = gamma-L-glutamyl-L-cysteine + ADP + phosphate + H(+). It participates in sulfur metabolism; glutathione biosynthesis; glutathione from L-cysteine and L-glutamate: step 1/2. This chain is Glutamate--cysteine ligase, found in Pseudomonas syringae pv. syringae.